The sequence spans 379 residues: uncharacterized protein (379 aa).

It belongs to the mimivirus L17x/L18x family.

This is an uncharacterized protein from Acanthamoeba polyphaga mimivirus (APMV).